Reading from the N-terminus, the 738-residue chain is Elongation factor G, mitochondrial (738 aa).

The interval 1 to 20 is disordered; sequence MCIGPAPTPETEEELPPSPQ. The tr-type G domain maps to 32–320; it reads RFQRNIGVSA…GVCAYLPNPA (289 aa). Residues 41–48, 118–122, and 172–175 each bind GTP; these read AHIDSGKT, DTPGH, and NKMD.

The protein belongs to the TRAFAC class translation factor GTPase superfamily. Classic translation factor GTPase family. EF-G/EF-2 subfamily.

It localises to the mitochondrion. It functions in the pathway protein biosynthesis; polypeptide chain elongation. Functionally, mitochondrial GTPase that catalyzes the GTP-dependent ribosomal translocation step during translation elongation. During this step, the ribosome changes from the pre-translocational (PRE) to the post-translocational (POST) state as the newly formed A-site-bound peptidyl-tRNA and P-site-bound deacylated tRNA move to the P and E sites, respectively. Catalyzes the coordinated movement of the two tRNA molecules, the mRNA and conformational changes in the ribosome. The sequence is that of Elongation factor G, mitochondrial from Laccaria bicolor (strain S238N-H82 / ATCC MYA-4686) (Bicoloured deceiver).